We begin with the raw amino-acid sequence, 496 residues long: Bifunctional protein HldE (496 aa).

The ribokinase stretch occupies residues Met1–Ala331. Asn206–Glu209 lines the ATP pocket. Residue Asp276 is part of the active site. A cytidylyltransferase region spans residues Phe358–Leu496.

The protein in the N-terminal section; belongs to the carbohydrate kinase PfkB family. This sequence in the C-terminal section; belongs to the cytidylyltransferase family. Homodimer.

The enzyme catalyses D-glycero-beta-D-manno-heptose 7-phosphate + ATP = D-glycero-beta-D-manno-heptose 1,7-bisphosphate + ADP + H(+). It catalyses the reaction D-glycero-beta-D-manno-heptose 1-phosphate + ATP + H(+) = ADP-D-glycero-beta-D-manno-heptose + diphosphate. Its pathway is nucleotide-sugar biosynthesis; ADP-L-glycero-beta-D-manno-heptose biosynthesis; ADP-L-glycero-beta-D-manno-heptose from D-glycero-beta-D-manno-heptose 7-phosphate: step 1/4. It functions in the pathway nucleotide-sugar biosynthesis; ADP-L-glycero-beta-D-manno-heptose biosynthesis; ADP-L-glycero-beta-D-manno-heptose from D-glycero-beta-D-manno-heptose 7-phosphate: step 3/4. Its function is as follows. Catalyzes the phosphorylation of D-glycero-D-manno-heptose 7-phosphate at the C-1 position to selectively form D-glycero-beta-D-manno-heptose-1,7-bisphosphate. Catalyzes the ADP transfer from ATP to D-glycero-beta-D-manno-heptose 1-phosphate, yielding ADP-D-glycero-beta-D-manno-heptose. The protein is Bifunctional protein HldE of Rhodospirillum rubrum (strain ATCC 11170 / ATH 1.1.1 / DSM 467 / LMG 4362 / NCIMB 8255 / S1).